Consider the following 431-residue polypeptide: Serine hydroxymethyltransferase (431 aa).

(6S)-5,6,7,8-tetrahydrofolate is bound by residues leucine 128 and glycine 132 to leucine 134. N6-(pyridoxal phosphate)lysine is present on lysine 237.

The protein belongs to the SHMT family. Homodimer. Pyridoxal 5'-phosphate serves as cofactor.

The protein resides in the cytoplasm. The enzyme catalyses (6R)-5,10-methylene-5,6,7,8-tetrahydrofolate + glycine + H2O = (6S)-5,6,7,8-tetrahydrofolate + L-serine. Its pathway is one-carbon metabolism; tetrahydrofolate interconversion. The protein operates within amino-acid biosynthesis; glycine biosynthesis; glycine from L-serine: step 1/1. Functionally, catalyzes the reversible interconversion of serine and glycine with tetrahydrofolate (THF) serving as the one-carbon carrier. This reaction serves as the major source of one-carbon groups required for the biosynthesis of purines, thymidylate, methionine, and other important biomolecules. Also exhibits THF-independent aldolase activity toward beta-hydroxyamino acids, producing glycine and aldehydes, via a retro-aldol mechanism. The polypeptide is Serine hydroxymethyltransferase (Ruegeria sp. (strain TM1040) (Silicibacter sp.)).